The sequence spans 205 residues: Ras-related protein RABC2b (205 aa).

A GTP-binding site is contributed by 20–27 (GDSGVGKS). The Effector region signature appears at 41-49 (LAPTIGVDF). GTP-binding positions include 67 to 71 (DTAGQ), 127 to 130 (NKVD), and 157 to 158 (SA). Residues Cys202 and Cys203 are each lipidated (S-geranylgeranyl cysteine).

Belongs to the small GTPase superfamily. Rab family.

It is found in the cell membrane. In terms of biological role, intracellular vesicle trafficking and protein transport. This chain is Ras-related protein RABC2b (RABC2B), found in Arabidopsis thaliana (Mouse-ear cress).